The chain runs to 454 residues: MEMEEVLSEVIQRIRPSDEERAFVKGLMEELRTIAEERIEELGLDARPYFVGSLAKDTYLAGDHDIDLFLAFPLETPLEELRKKGLELGKAIAEKLDSHEIAYAEHPYVRARYRGVRVDLVPCYDVGNWRDVRTAVDRSILHTRWVNENLRGRNDEVRLLKRFLKGINAYGSEIYVRGFSGYLAEILVIKYGSFLDVVEKADFLLRQKIIDPENWLRKEPEVALKTVKRETEEDRPLIVIDPVDPRRNVSANLSWEKYGRFYFKSIEFLENPSVGFFFPPEKPKGSYLDELRKRGTALVTLLINVPDMVDDVLLPQLERSARGFERTLEREGFGVLGWDVGRKGRAFIMLELDRERRERVKIKPGPEFFTERGRDFYRKNEKVWLIGKRLYSEKLVRESVVDVIIELLEKNQVSLGKGIRDAIRRADILLNYVPKELEEEAYLFLSREKWNIKG.

ATP is bound by residues Ser-53 and Lys-56. CTP contacts are provided by Ser-53 and Lys-56. Mg(2+)-binding residues include Asp-65, Asp-67, and Asp-119. His-142, Lys-161, and Tyr-170 together coordinate ATP. The CTP site is built by His-142, Lys-161, and Tyr-170.

Belongs to the tRNA nucleotidyltransferase/poly(A) polymerase family. Archaeal CCA-adding enzyme subfamily. In terms of assembly, homodimer. Requires Mg(2+) as cofactor.

The enzyme catalyses a tRNA precursor + 2 CTP + ATP = a tRNA with a 3' CCA end + 3 diphosphate. It carries out the reaction a tRNA with a 3' CCA end + 2 CTP + ATP = a tRNA with a 3' CCACCA end + 3 diphosphate. In terms of biological role, catalyzes the addition and repair of the essential 3'-terminal CCA sequence in tRNAs without using a nucleic acid template. Adds these three nucleotides in the order of C, C, and A to the tRNA nucleotide-73, using CTP and ATP as substrates and producing inorganic pyrophosphate. tRNA 3'-terminal CCA addition is required both for tRNA processing and repair. Also involved in tRNA surveillance by mediating tandem CCA addition to generate a CCACCA at the 3' terminus of unstable tRNAs. While stable tRNAs receive only 3'-terminal CCA, unstable tRNAs are marked with CCACCA and rapidly degraded. This chain is CCA-adding enzyme, found in Thermococcus gammatolerans (strain DSM 15229 / JCM 11827 / EJ3).